The sequence spans 713 residues: Segment polarity protein dishevelled homolog DVL-3 (713 aa).

The region spanning 1–82 (MGETKVIYHL…RVVCWLVSAD (82 aa)) is the DIX domain. Composition is skewed to polar residues over residues 87–98 (DAGSVCADNQSD) and 118–127 (HPNTRGSQEN). A disordered region spans residues 87–235 (DAGSVCADNQ…PRIERSSSFS (149 aa)). Residues 140-155 (AHRERPRRKETPEHAT) show a composition bias toward basic and acidic residues. Residues 173–189 (ESSSTLMSSELDSTSFF) are compositionally biased toward low complexity. The segment covering 199–210 (RFSNSTEQSSAS) has biased composition (polar residues). Residues 212 to 225 (LMRRHKRRRRKPKA) show a composition bias toward basic residues. The 86-residue stretch at 248 to 333 (TVTLNMEKYN…KPGPITLTVA (86 aa)) folds into the PDZ domain. The DEP domain maps to 421-495 (PESGLEVRDR…SEQCYYIFGD (75 aa)). Positions 508–518 (HDGSSGTSDQD) are enriched in polar residues. 2 disordered regions span residues 508 to 527 (HDGSSGTSDQDTLAPLPHPG) and 545 to 652 (YSPH…GPPG). Residues 564–579 (GSQHSEGSRSSGSNRS) show a composition bias toward low complexity. Basic and acidic residues-rich tracts occupy residues 580–593 (STEKRKEREAKGGD) and 602–618 (ESDHTTRSSVRRERAAS). The span at 629–646 (HRSHHSIAHSIRSHHTHH) shows a compositional bias: basic residues.

This sequence belongs to the DSH family.

Its subcellular location is the cytoplasm. Its function is as follows. Involved in the signal transduction pathway mediated by multiple Wnt genes. Required during ciliogenesis for the docking of basal bodies to the apical plasma membrane. The polypeptide is Segment polarity protein dishevelled homolog DVL-3 (Xenopus tropicalis (Western clawed frog)).